A 246-amino-acid polypeptide reads, in one-letter code: 1-(5-phosphoribosyl)-5-[(5-phosphoribosylamino)methylideneamino] imidazole-4-carboxamide isomerase (246 aa).

D8 functions as the Proton acceptor in the catalytic mechanism. D131 serves as the catalytic Proton donor.

It belongs to the HisA/HisF family.

Its subcellular location is the cytoplasm. It catalyses the reaction 1-(5-phospho-beta-D-ribosyl)-5-[(5-phospho-beta-D-ribosylamino)methylideneamino]imidazole-4-carboxamide = 5-[(5-phospho-1-deoxy-D-ribulos-1-ylimino)methylamino]-1-(5-phospho-beta-D-ribosyl)imidazole-4-carboxamide. Its pathway is amino-acid biosynthesis; L-histidine biosynthesis; L-histidine from 5-phospho-alpha-D-ribose 1-diphosphate: step 4/9. In Albidiferax ferrireducens (strain ATCC BAA-621 / DSM 15236 / T118) (Rhodoferax ferrireducens), this protein is 1-(5-phosphoribosyl)-5-[(5-phosphoribosylamino)methylideneamino] imidazole-4-carboxamide isomerase.